An 82-amino-acid polypeptide reads, in one-letter code: Small ribosomal subunit protein bS16 (82 aa).

It belongs to the bacterial ribosomal protein bS16 family.

The chain is Small ribosomal subunit protein bS16 from Salmonella agona (strain SL483).